The sequence spans 272 residues: 4-hydroxy-tetrahydrodipicolinate reductase (272 aa).

Residues 11-16 (GVSGRM) and Glu-37 contribute to the NAD(+) site. NADP(+) is bound at residue Arg-38. Residues 101 to 103 (GTT) and 125 to 128 (AGNM) each bind NAD(+). Catalysis depends on His-158, which acts as the Proton donor/acceptor. His-159 is a (S)-2,3,4,5-tetrahydrodipicolinate binding site. The active-site Proton donor is the Lys-162. Residue 168-169 (GT) participates in (S)-2,3,4,5-tetrahydrodipicolinate binding.

It belongs to the DapB family.

It is found in the cytoplasm. The catalysed reaction is (S)-2,3,4,5-tetrahydrodipicolinate + NAD(+) + H2O = (2S,4S)-4-hydroxy-2,3,4,5-tetrahydrodipicolinate + NADH + H(+). It carries out the reaction (S)-2,3,4,5-tetrahydrodipicolinate + NADP(+) + H2O = (2S,4S)-4-hydroxy-2,3,4,5-tetrahydrodipicolinate + NADPH + H(+). It functions in the pathway amino-acid biosynthesis; L-lysine biosynthesis via DAP pathway; (S)-tetrahydrodipicolinate from L-aspartate: step 4/4. Catalyzes the conversion of 4-hydroxy-tetrahydrodipicolinate (HTPA) to tetrahydrodipicolinate. The protein is 4-hydroxy-tetrahydrodipicolinate reductase of Roseobacter denitrificans (strain ATCC 33942 / OCh 114) (Erythrobacter sp. (strain OCh 114)).